Reading from the N-terminus, the 502-residue chain is Protein DETOXIFICATION 49 (502 aa).

Helical transmembrane passes span 41 to 61, 75 to 95, 123 to 143, 153 to 173, 190 to 210, 216 to 236, 267 to 287, 293 to 313, 338 to 358, 372 to 392, 414 to 434, and 439 to 459; these read LPLILTGLLLYSRSMISMLFL, LALGFANITGYSLLSGLSIGM, LLCSLPISILWLNIKKILLFF, AEIFILFSLPDLILQSFLHPI, AFFAVLLHIPINYLLVSSLGL, ALGAIWTNVNLLGFLIIYIVF, VSVCLEWWWYEIMILLCGLLL, VASMGILIQTTALIYIFPSSL, RTGLSLSLGLGLLAMFFALMV, IVKLTSMVLPIIGLCELGNCP, LCCFYFVGMPVAVWLSFFSGF, and LWLGLFAAQGSCLISMLVVLA.

This sequence belongs to the multi antimicrobial extrusion (MATE) (TC 2.A.66.1) family.

Its subcellular location is the membrane. This Arabidopsis thaliana (Mouse-ear cress) protein is Protein DETOXIFICATION 49.